The chain runs to 288 residues: Probable branched-chain-amino-acid aminotransferase (288 aa).

Lysine 153 carries the N6-(pyridoxal phosphate)lysine modification.

This sequence belongs to the class-IV pyridoxal-phosphate-dependent aminotransferase family. Requires pyridoxal 5'-phosphate as cofactor.

It carries out the reaction L-leucine + 2-oxoglutarate = 4-methyl-2-oxopentanoate + L-glutamate. It catalyses the reaction L-isoleucine + 2-oxoglutarate = (S)-3-methyl-2-oxopentanoate + L-glutamate. The catalysed reaction is L-valine + 2-oxoglutarate = 3-methyl-2-oxobutanoate + L-glutamate. It participates in amino-acid biosynthesis; L-isoleucine biosynthesis; L-isoleucine from 2-oxobutanoate: step 4/4. The protein operates within amino-acid biosynthesis; L-leucine biosynthesis; L-leucine from 3-methyl-2-oxobutanoate: step 4/4. It functions in the pathway amino-acid biosynthesis; L-valine biosynthesis; L-valine from pyruvate: step 4/4. In terms of biological role, acts on leucine, isoleucine and valine. The protein is Probable branched-chain-amino-acid aminotransferase (ilvE) of Rickettsia typhi (strain ATCC VR-144 / Wilmington).